The primary structure comprises 289 residues: Lipoyl synthase 2 (289 aa).

7 residues coordinate [4Fe-4S] cluster: cysteine 43, cysteine 48, cysteine 54, cysteine 69, cysteine 73, cysteine 76, and serine 282. The Radical SAM core domain maps to 55–271; the sequence is YAQKTATFLL…GAVARDLGFA (217 aa).

Belongs to the radical SAM superfamily. Lipoyl synthase family. It depends on [4Fe-4S] cluster as a cofactor.

It is found in the cytoplasm. The enzyme catalyses [[Fe-S] cluster scaffold protein carrying a second [4Fe-4S](2+) cluster] + N(6)-octanoyl-L-lysyl-[protein] + 2 oxidized [2Fe-2S]-[ferredoxin] + 2 S-adenosyl-L-methionine + 4 H(+) = [[Fe-S] cluster scaffold protein] + N(6)-[(R)-dihydrolipoyl]-L-lysyl-[protein] + 4 Fe(3+) + 2 hydrogen sulfide + 2 5'-deoxyadenosine + 2 L-methionine + 2 reduced [2Fe-2S]-[ferredoxin]. Its pathway is protein modification; protein lipoylation via endogenous pathway; protein N(6)-(lipoyl)lysine from octanoyl-[acyl-carrier-protein]: step 2/2. Its function is as follows. Catalyzes the radical-mediated insertion of two sulfur atoms into the C-6 and C-8 positions of the octanoyl moiety bound to the lipoyl domains of lipoate-dependent enzymes, thereby converting the octanoylated domains into lipoylated derivatives. This is Lipoyl synthase 2 from Gloeobacter violaceus (strain ATCC 29082 / PCC 7421).